Consider the following 146-residue polypeptide: Transcriptional regulator MraZ (146 aa).

SpoVT-AbrB domains follow at residues 4–46 (SYEK…SKKS) and 75–118 (TIEV…SKEK).

It belongs to the MraZ family. Forms oligomers.

It is found in the cytoplasm. The protein localises to the nucleoid. In Mycoplasma mobile (strain ATCC 43663 / 163K / NCTC 11711) (Mesomycoplasma mobile), this protein is Transcriptional regulator MraZ.